Reading from the N-terminus, the 631-residue chain is Sperm-associated antigen 16 protein (631 aa).

Positions 152-267 form a coiled coil; the sequence is DVYTQIMLLE…LQETLKKLQR (116 aa). Positions 266–332 are disordered; that stretch reads QRGHSYHGPQ…QPNPNLNVSK (67 aa). Basic and acidic residues-rich tracts occupy residues 277–287 and 295–304; these read KVDHSREKENA and GLREAREQNK. WD repeat units lie at residues 350–389, 392–431, 434–473, 476–515, 518–557, 560–600, and 601–630; these read LHEL…VLLT, GHTD…CILT, GHSR…CRCT, GHTD…CEQS, GHMH…PIVS, IGPS…HKLM, and GHEN…VRTW.

In terms of assembly, interacts with SPAG6 and STK36. Phosphorylated by TSSK2. As to expression, isoform 1 is detected in testis. Isoform 4 is detected in testis and brain, and at lower levels in kidney, heart, pancreas, thyroid, ovary, adrenal gland, spinal cord, trachea and liver.

The protein resides in the cytoplasm. It is found in the cytoskeleton. The protein localises to the flagellum axoneme. Its subcellular location is the cilium axoneme. It localises to the cell projection. The protein resides in the cilium. It is found in the flagellum. Its function is as follows. Necessary for sperm flagellar function. Plays a role in motile ciliogenesis. May help to recruit STK36 to the cilium or apical surface of the cell to initiate subsequent steps of construction of the central pair apparatus of motile cilia. This is Sperm-associated antigen 16 protein (SPAG16) from Homo sapiens (Human).